The chain runs to 445 residues: Methionine aminopeptidase 2-3 (445 aa).

The segment at 14 to 115 (ISDADANGAD…ENRYRTTSEE (102 aa)) is disordered. Acidic residues predominate over residues 38–47 (EDDDSDDDVA). The segment covering 60 to 75 (AKKKKNKKRKPKKKQP) has biased composition (basic residues). A compositionally biased stretch (polar residues) spans 85 to 95 (PLSQLFPNNTY). Positions 97–115 (KGEEVEYKDENRYRTTSEE) are enriched in basic and acidic residues. Residue histidine 198 participates in substrate binding. A divalent metal cation-binding residues include aspartate 218, aspartate 229, and histidine 298. Histidine 306 is a substrate binding site. Residues glutamate 331 and glutamate 426 each contribute to the a divalent metal cation site.

It belongs to the peptidase M24A family. Methionine aminopeptidase eukaryotic type 2 subfamily. It depends on Co(2+) as a cofactor. The cofactor is Zn(2+). Mn(2+) serves as cofactor. Fe(2+) is required as a cofactor.

Its subcellular location is the cytoplasm. It catalyses the reaction Release of N-terminal amino acids, preferentially methionine, from peptides and arylamides.. In terms of biological role, cotranslationally removes the N-terminal methionine from nascent proteins. The N-terminal methionine is often cleaved when the second residue in the primary sequence is small and uncharged (Met-Ala-, Cys, Gly, Pro, Ser, Thr, or Val). This is Methionine aminopeptidase 2-3 from Neosartorya fischeri (strain ATCC 1020 / DSM 3700 / CBS 544.65 / FGSC A1164 / JCM 1740 / NRRL 181 / WB 181) (Aspergillus fischerianus).